Consider the following 258-residue polypeptide: GTP cyclohydrolase FolE2 (258 aa).

This sequence belongs to the GTP cyclohydrolase IV family.

It carries out the reaction GTP + H2O = 7,8-dihydroneopterin 3'-triphosphate + formate + H(+). Its pathway is cofactor biosynthesis; 7,8-dihydroneopterin triphosphate biosynthesis; 7,8-dihydroneopterin triphosphate from GTP: step 1/1. In terms of biological role, converts GTP to 7,8-dihydroneopterin triphosphate. The polypeptide is GTP cyclohydrolase FolE2 (Geobacter sulfurreducens (strain ATCC 51573 / DSM 12127 / PCA)).